The following is a 414-amino-acid chain: Esterase FrsA (414 aa).

The protein belongs to the FrsA family.

The enzyme catalyses a carboxylic ester + H2O = an alcohol + a carboxylate + H(+). Catalyzes the hydrolysis of esters. This is Esterase FrsA from Escherichia coli O8 (strain IAI1).